The chain runs to 105 residues: Large ribosomal subunit protein bL21 (105 aa).

The protein belongs to the bacterial ribosomal protein bL21 family. Part of the 50S ribosomal subunit. Contacts protein L20.

Functionally, this protein binds to 23S rRNA in the presence of protein L20. The protein is Large ribosomal subunit protein bL21 of Rhizobium johnstonii (strain DSM 114642 / LMG 32736 / 3841) (Rhizobium leguminosarum bv. viciae).